The sequence spans 63 residues: Large ribosomal subunit protein uL29 (63 aa).

The protein belongs to the universal ribosomal protein uL29 family.

In Psychromonas ingrahamii (strain DSM 17664 / CCUG 51855 / 37), this protein is Large ribosomal subunit protein uL29.